The sequence spans 266 residues: Bidirectional sugar transporter SWEET7b (266 aa).

Over 1 to 9 the chain is Extracellular; sequence MVSPDLIRN. A helical membrane pass occupies residues 10–30; the sequence is MVGIVGNIISFGLFLSPVPTF. One can recognise a MtN3/slv 1 domain in the interval 10–97; it reads MVGIVGNIIS…TIFFLFSDKK (88 aa). The Cytoplasmic segment spans residues 31 to 45; sequence YRIIKNKDVQDFKAD. The helical transmembrane segment at 46–66 threads the bilayer; sequence PYLATLLNCMLWVFYGLPIVH. The Extracellular portion of the chain corresponds to 67-69; it reads PNS. A helical transmembrane segment spans residues 70–90; that stretch reads ILVVTINGIGLIIEAVYLTIF. The Cytoplasmic portion of the chain corresponds to 91–101; the sequence is FLFSDKKNKKK. The helical transmembrane segment at 102–122 threads the bilayer; it reads MGVVLATEALFMAAVVLGVLL. At 123 to 131 the chain is on the extracellular side; that stretch reads GAHTHQRRS. Residues 132-152 form a helical membrane-spanning segment; the sequence is LIVGILCAIFGTIMYSSPLTI. Residues 133–216 form the MtN3/slv 2 domain; sequence IVGILCAIFG…LILYAIYYRT (84 aa). The Cytoplasmic portion of the chain corresponds to 153–165; that stretch reads MSQVVKTKSVEYM. The helical transmembrane segment at 166–186 threads the bilayer; sequence PLLLSVVSFLNGLCWTSYALI. Residues 187 to 189 lie on the Extracellular side of the membrane; that stretch reads RLD. Residues 190 to 210 traverse the membrane as a helical segment; the sequence is IFITIPNGLGVLFALMQLILY. Residues 211–266 lie on the Cytoplasmic side of the membrane; it reads AIYYRTTPKKQDKNLELPTVAPVAKDTSIVTPVSKDDDVVDGGNASHVTINITIEP.

This sequence belongs to the SWEET sugar transporter family. Forms homooligomers and/or heterooligomers.

The protein localises to the cell membrane. Functionally, mediates both low-affinity uptake and efflux of sugar across the plasma membrane. The polypeptide is Bidirectional sugar transporter SWEET7b (SWEET7B) (Oryza sativa subsp. indica (Rice)).